A 92-amino-acid polypeptide reads, in one-letter code: MAKVCIAAYVYGVVQGVGFRYSTQRQALALGVTGYARNCDDGSVEVVAYGEQQAVEQLMEWIKQGGPRGARVDRLLTEPYPATPFETFKIRY.

The 88-residue stretch at 5 to 92 (CIAAYVYGVV…TPFETFKIRY (88 aa)) folds into the Acylphosphatase-like domain. Residues Arg-20 and Asn-38 contribute to the active site.

The protein belongs to the acylphosphatase family.

The enzyme catalyses an acyl phosphate + H2O = a carboxylate + phosphate + H(+). In Yersinia enterocolitica serotype O:8 / biotype 1B (strain NCTC 13174 / 8081), this protein is Acylphosphatase (acyP).